Here is a 510-residue protein sequence, read N- to C-terminus: Probable cytochrome P450 517A2 (510 aa).

Residues Met-1–Lys-21 form a helical membrane-spanning segment. A heme-binding site is contributed by Cys-450.

Belongs to the cytochrome P450 family. Heme serves as cofactor.

Its subcellular location is the membrane. The polypeptide is Probable cytochrome P450 517A2 (cyp517A2) (Dictyostelium discoideum (Social amoeba)).